The chain runs to 119 residues: MVSLKPSKQRKLLYTLPLHQRKKLLVAKVSDDIASQYGIKRIRVRKGDTVRVMRGGNSGKEGKVVEVNTKTGRLAIEGITRKKVDGTPVYVWIHASKVMITKLDLSDPRRREKLEKSKK.

This sequence belongs to the universal ribosomal protein uL24 family. As to quaternary structure, part of the 50S ribosomal subunit.

One of two assembly initiator proteins, it binds directly to the 5'-end of the 23S rRNA, where it nucleates assembly of the 50S subunit. Its function is as follows. Located at the polypeptide exit tunnel on the outside of the subunit. In Saccharolobus solfataricus (strain ATCC 35092 / DSM 1617 / JCM 11322 / P2) (Sulfolobus solfataricus), this protein is Large ribosomal subunit protein uL24.